A 475-amino-acid chain; its full sequence is MEGLLTRCRALPALATCSRQLSGYVPCRFHHCAPRRGRRLLLSRVFQPQNLREDRVLSLQDKSDDLTCKSQRLMLQVGLIYPASPGCYHLLPYTVRAMEKLVRVIDQEMQAIGGQKVNMPSLSPAELWQATNRWDLMGKELLRLRDRHGKEYCLGPTHEEAITALIASQKKLSYKQLPFLLYQVTRKFRDEPRPRFGLLRGREFYMKDMYTFDSSPEAAQQTYSLVCDAYCSLFNKLGLPFVKVQADVGTIGGTVSHEFQLPVDIGEDRLAICPRCSFSANMETLDLSQMNCPACQGPLTKTKGIEVGHTFYLGTKYSSIFNAQFTNVCGKPTLAEMGCYGLGVTRILAAAIEVLSTEDCVRWPSLLAPYQACLIPPKKGSKEQAASELIGQLYDHITEAVPQLHGEVLLDDRTHLTIGNRLKDANKFGYPFVIIAGKRALEDPAHFEVWCQNTGEVAFLTKDGVMDLLTPVQTV.

The N-terminal 29 residues, Met-1–Phe-29, are a transit peptide targeting the mitochondrion.

The protein belongs to the class-II aminoacyl-tRNA synthetase family.

The protein resides in the mitochondrion matrix. It carries out the reaction tRNA(Pro) + L-proline + ATP = L-prolyl-tRNA(Pro) + AMP + diphosphate. In terms of biological role, mitochondrial aminoacyl-tRNA synthetase that catalyzes the specific attachment of the proline amino acid (aa) to the homologous transfer RNA (tRNA), further participating in protein synthesis. The reaction occurs in a two steps: proline is first activated by ATP to form Pro-AMP and then transferred to the acceptor end of tRNA(Pro). The polypeptide is Probable proline--tRNA ligase, mitochondrial (Homo sapiens (Human)).